We begin with the raw amino-acid sequence, 122 residues long: Large ribosomal subunit protein uL14 (122 aa).

The protein belongs to the universal ribosomal protein uL14 family. As to quaternary structure, part of the 50S ribosomal subunit. Forms a cluster with proteins L3 and L19. In the 70S ribosome, L14 and L19 interact and together make contacts with the 16S rRNA in bridges B5 and B8.

Binds to 23S rRNA. Forms part of two intersubunit bridges in the 70S ribosome. The protein is Large ribosomal subunit protein uL14 of Pseudomonas entomophila (strain L48).